Consider the following 414-residue polypeptide: Serine--tRNA ligase (414 aa).

230 to 232 is a binding site for L-serine; sequence TAE. Residue 261-263 coordinates ATP; it reads RKE. An L-serine-binding site is contributed by E284. ATP is bound at residue 348-351; the sequence is EISS. Residue S382 coordinates L-serine.

It belongs to the class-II aminoacyl-tRNA synthetase family. Type-1 seryl-tRNA synthetase subfamily. Homodimer. The tRNA molecule binds across the dimer.

It is found in the cytoplasm. It carries out the reaction tRNA(Ser) + L-serine + ATP = L-seryl-tRNA(Ser) + AMP + diphosphate + H(+). It catalyses the reaction tRNA(Sec) + L-serine + ATP = L-seryl-tRNA(Sec) + AMP + diphosphate + H(+). Its pathway is aminoacyl-tRNA biosynthesis; selenocysteinyl-tRNA(Sec) biosynthesis; L-seryl-tRNA(Sec) from L-serine and tRNA(Sec): step 1/1. Functionally, catalyzes the attachment of serine to tRNA(Ser). Is also able to aminoacylate tRNA(Sec) with serine, to form the misacylated tRNA L-seryl-tRNA(Sec), which will be further converted into selenocysteinyl-tRNA(Sec). The chain is Serine--tRNA ligase from Nitratiruptor sp. (strain SB155-2).